The chain runs to 148 residues: Snaclec 7 (148 aa).

The signal sequence occupies residues 1-23 (MGRFIFVSFGLLVVFLSLSGTGA). 3 disulfides stabilise this stretch: Cys27-Cys38, Cys55-Cys144, and Cys121-Cys136. In terms of domain architecture, C-type lectin spans 34–145 (HERHCYKVIN…CSSTHPFVCK (112 aa)).

The protein belongs to the snaclec family. As to quaternary structure, heterodimer; disulfide-linked. Expressed by the venom gland.

The protein localises to the secreted. In terms of biological role, interferes with one step of hemostasis (modulation of platelet aggregation, or coagulation cascade, for example). This Echis pyramidum leakeyi (Leakey's carpet viper) protein is Snaclec 7.